The following is a 436-amino-acid chain: D-amino acid dehydrogenase (436 aa).

3-17 is a binding site for FAD; sequence ILILGSGVIGVTSAW.

It belongs to the DadA oxidoreductase family. The cofactor is FAD.

It carries out the reaction a D-alpha-amino acid + A + H2O = a 2-oxocarboxylate + AH2 + NH4(+). The protein operates within amino-acid degradation; D-alanine degradation; NH(3) and pyruvate from D-alanine: step 1/1. Its function is as follows. Oxidative deamination of D-amino acids. The sequence is that of D-amino acid dehydrogenase from Photorhabdus laumondii subsp. laumondii (strain DSM 15139 / CIP 105565 / TT01) (Photorhabdus luminescens subsp. laumondii).